Consider the following 332-residue polypeptide: MTEMTKPFLIVIVGPTASGKTELSIEVAKKFNGEIISGDSMQVYQGMDIGTAKVTTEEMEGIPHYMIDILPPDASFSAYEFKKRAEKYIKDITRRGKVPIIAGGTGLYIQSLLYNYAFEDESISEDKMKQVKLKLKELEHLNNNKLHEYLASFDKESAKDIHPNNRKRVLRAIEYYLKTKKLLSSRKKVQQFTENYDTLLIGIEMSRETLYLRINKRVDIMLGHGLFNEVQHLVEQGFEASQSMQAIGYKELVPVIKGNISMENAVEKLKQHSRQYAKRQLTWFKNKMNVHWLNKERMSLQMMLDEITTQINKRSSNHDCKRKHPRPSTREL.

14–21 (GPTASGKT) is an ATP binding site. 16 to 21 (TASGKT) is a substrate binding site. Positions 39–42 (DSMQ) are interaction with substrate tRNA. The interval 312–332 (NKRSSNHDCKRKHPRPSTREL) is disordered. Residues 320–332 (CKRKHPRPSTREL) show a composition bias toward basic residues.

Belongs to the IPP transferase family. In terms of assembly, monomer. It depends on Mg(2+) as a cofactor.

It catalyses the reaction adenosine(37) in tRNA + dimethylallyl diphosphate = N(6)-dimethylallyladenosine(37) in tRNA + diphosphate. Functionally, catalyzes the transfer of a dimethylallyl group onto the adenine at position 37 in tRNAs that read codons beginning with uridine, leading to the formation of N6-(dimethylallyl)adenosine (i(6)A). The polypeptide is tRNA dimethylallyltransferase (Staphylococcus epidermidis (strain ATCC 35984 / DSM 28319 / BCRC 17069 / CCUG 31568 / BM 3577 / RP62A)).